Here is a 109-residue protein sequence, read N- to C-terminus: Protein phosphatase 1 regulatory subunit 1C (109 aa).

The segment at 25-109 (AEQIRKRRPT…TNEREEQRDH (85 aa)) is disordered. Basic and acidic residues predominate over residues 45 to 54 (NPPEIDDKRV). Positions 55–75 (PNTQGELQNASPKQRKQSVYT) are enriched in polar residues. Positions 100–109 (TNEREEQRDH) are enriched in basic and acidic residues.

Belongs to the protein phosphatase inhibitor 1 family.

It is found in the cytoplasm. In terms of biological role, may increase cell susceptibility to TNF-induced apoptosis. This chain is Protein phosphatase 1 regulatory subunit 1C (PPP1R1C), found in Pongo abelii (Sumatran orangutan).